The primary structure comprises 424 residues: Appressorium protein ROW1 (424 aa).

The N-terminal stretch at 1-21 (MTKLTLTVALVSALLASGASA) is a signal peptide. 4 disordered regions span residues 19–54 (ASAQ…WQPK), 69–90 (ANRI…GYNT), 278–304 (SGST…CSSV), and 327–398 (SSSA…TQGA). Topologically, residues 22–403 (QQPTGTGNGP…NTQGAASSAS (382 aa)) are extracellular. Residues 37-54 (TDLNRNQPTKSWTQWQPK) show a composition bias toward polar residues. Composition is skewed to low complexity over residues 295-304 (APSSSQCSSV) and 327-347 (SSSA…SASS). Positions 362–382 (SGTGSGSGSGSGSGSGSGSGS) are enriched in gly residues. Residues 383–398 (SSGSSSSGSSSNTQGA) are compositionally biased toward low complexity. The chain crosses the membrane as a helical span at residues 404–424 (SLTISVGLAGLVAIGAAAFAL).

It is found in the cell membrane. The protein resides in the secreted. In terms of biological role, plays a role in the formation of the appressorium, a specialized infection structure with the purpose of penetrating the host surface, and is required for proper remodeling of the appressorium wall and vesicle secretion. The chain is Appressorium protein ROW1 from Mycosarcoma maydis (Corn smut fungus).